The sequence spans 188 residues: Probable RNA 2'-phosphotransferase (188 aa).

It belongs to the KptA/TPT1 family.

In terms of biological role, removes the 2'-phosphate from RNA via an intermediate in which the phosphate is ADP-ribosylated by NAD followed by a presumed transesterification to release the RNA and generate ADP-ribose 1''-2''-cyclic phosphate (APPR&gt;P). May function as an ADP-ribosylase. The chain is Probable RNA 2'-phosphotransferase from Lacticaseibacillus paracasei (strain ATCC 334 / BCRC 17002 / CCUG 31169 / CIP 107868 / KCTC 3260 / NRRL B-441) (Lactobacillus paracasei).